The following is a 142-amino-acid chain: Large ribosomal subunit protein uL22c (142 aa).

This sequence belongs to the universal ribosomal protein uL22 family. As to quaternary structure, part of the 50S ribosomal subunit.

Its subcellular location is the plastid. The protein localises to the chloroplast. This protein binds specifically to 23S rRNA. Functionally, the globular domain of the protein is located near the polypeptide exit tunnel on the outside of the subunit, while an extended beta-hairpin is found that lines the wall of the exit tunnel in the center of the 70S ribosome. This Ceratophyllum demersum (Rigid hornwort) protein is Large ribosomal subunit protein uL22c (rpl22).